The primary structure comprises 243 residues: CRISPR-associated endoribonuclease Cas6 (243 aa).

Belongs to the CRISPR-associated endoribonuclease Cas6 family. Part of the Csm effector complex that includes at least Cas10(1), Csm2(3), Csm3(5), Csm4(1); the presence of Csm5 and Cas6 may depend on the processing state of precursor crRNA. Csm with a precursor crRNA does not include Csm5, while Cas6, the enzyme probably involved in pre-crRNA processing, is found associated with a subset of the Csm complex that is probably in the process of pre-crRNA maturation. The Csm complex is elongated and slightly twisted with a maximal length of 215 Angstroms and a diameter of 75-80 Angstroms. It has been modeled to have a central protein filamant of Csm3 subunits along which the dsRNA helix of paired crRNA and target RNA binds. The filament is capped at one end by Cas10 and Csm4 and at the other end by Csm5; ssDNA is thought to bind to the N-terminal HD domain of Cas10.

In terms of biological role, CRISPR (clustered regularly interspaced short palindromic repeat) is an adaptive immune system that provides protection against mobile genetic elements (viruses, transposable elements and conjugative plasmids). CRISPR clusters contain spacers, sequences complementary to antecedent mobile elements, and target invading nucleic acids. CRISPR clusters are transcribed and processed into CRISPR RNA (crRNA). The type III-A Csm effector complex binds crRNA and acts as a crRNA-guided RNase, DNase and cyclic oligoadenylate synthase; binding of target RNA cognate to the crRNA is required for all activities. In a heterologous host this Csm effector complex restricts ssRNA phage MS2, suggesting it may target RNA viruses in vivo. Its function is as follows. Csm functions as a non-specific ssDNase. Base-pairing between crRNA and target RNA to form a ternary Csm complex activates a ssDNase activity; target RNA cleavage suppresses the ssDNase, a temporal control that prevents uncontrolled DNA degradation. Viral RNA transcripts probably tether the Csm complex to the viral genome, recruiting Cas10 ssDNA activity which is able to degrade DNA in the transcription bubble, spatially controlling the DNase activity. This protein processes pre-crRNA into individual crRNA units. The chain is CRISPR-associated endoribonuclease Cas6 from Streptococcus thermophilus.